The primary structure comprises 302 residues: Short-chain dehydrogenase/reductase 3 (302 aa).

The next 4 helical transmembrane spans lie at 9 to 29 (LVVFPLQMIYLVVKAAVGLVL), 170 to 190 (IVCLNSVLALSAIPGAIDYCT), 195 to 215 (AFAFMESLTLGLLDCPGVSAT), and 253 to 273 (AVQLNQALLLLPWTMHALIIL). Ser-175 is a substrate binding site. Residue Tyr-188 is the Proton acceptor of the active site.

It belongs to the short-chain dehydrogenases/reductases (SDR) family. In the retina, expressed in cone but not rod outer segments.

Its subcellular location is the membrane. It carries out the reaction all-trans-retinol + NADP(+) = all-trans-retinal + NADPH + H(+). In terms of biological role, catalyzes the reduction of all-trans-retinal to all-trans-retinol in the presence of NADPH. The chain is Short-chain dehydrogenase/reductase 3 (DHRS3) from Bos taurus (Bovine).